Consider the following 364-residue polypeptide: Variable large protein 21 (364 aa).

An N-terminal signal peptide occupies residues 1-26 (MRKRISAIINKLNISIMMMIVVLMIG). Cys-27 carries N-palmitoyl cysteine lipidation. A lipid anchor (S-diacylglycerol cysteine) is attached at Cys-27.

It belongs to the variable large protein (Vlp) family. Alpha subfamily.

Its subcellular location is the cell outer membrane. Functionally, the Vlp and Vsp proteins are antigenically distinct proteins, only one vlp or vsp gene is transcriptionally active at any one time. Switching between these genes is a mechanism of host immune response evasion. The sequence is that of Variable large protein 21 from Borrelia hermsii.